The chain runs to 614 residues: Lamin-2 (614 aa).

Basic residues predominate over residues methionine 1–glycine 10. The tract at residues methionine 1–threonine 51 is disordered. Residues methionine 1–leucine 76 are head. Over residues alanine 21–threonine 37 the composition is skewed to low complexity. Positions serine 77–serine 117 are coil 1A. The IF rod domain maps to glutamate 81–leucine 433. Positions serine 118–lysine 128 are linker 1. Residues glutamate 129 to arginine 268 form a coil 1B region. Residues arginine 269–lysine 286 form a linker 2 region. Positions isoleucine 287–leucine 426 are coil 2. A tail region spans residues arginine 427–cysteine 611. Positions leucine 433–arginine 454 are disordered. Positions arginine 449–serine 458 match the Nuclear localization signal motif. The LTD domain maps to threonine 462–serine 581. Cysteine 611 carries S-farnesyl cysteine lipidation. Residues valine 612 to methionine 614 constitute a propeptide, removed in mature form.

This sequence belongs to the intermediate filament family.

It localises to the nucleus inner membrane. In terms of biological role, intermediate filament (IF) protein, component of the nuclear lamina, a fibrous layer on the nucleoplasmic side of the inner nuclear membrane, which is thought to provide a framework for the nuclear envelope. The protein is Lamin-2 of Hypsibius exemplaris (Freshwater tardigrade).